A 456-amino-acid chain; its full sequence is Phosphomethylpyrimidine synthase (456 aa).

Substrate-binding positions include Asn80, Met109, Tyr139, His175, 195 to 197 (SRG), 236 to 239 (DSLR), and Glu275. Residue His279 coordinates Zn(2+). Tyr302 provides a ligand contact to substrate. Zn(2+) is bound at residue His343. Residues Cys423, Cys426, and Cys431 each contribute to the [4Fe-4S] cluster site.

It belongs to the ThiC family. The cofactor is [4Fe-4S] cluster.

The enzyme catalyses 5-amino-1-(5-phospho-beta-D-ribosyl)imidazole + S-adenosyl-L-methionine = 4-amino-2-methyl-5-(phosphooxymethyl)pyrimidine + CO + 5'-deoxyadenosine + formate + L-methionine + 3 H(+). Its pathway is cofactor biosynthesis; thiamine diphosphate biosynthesis. Its function is as follows. Catalyzes the synthesis of the hydroxymethylpyrimidine phosphate (HMP-P) moiety of thiamine from aminoimidazole ribotide (AIR) in a radical S-adenosyl-L-methionine (SAM)-dependent reaction. This Synechococcus elongatus (strain ATCC 33912 / PCC 7942 / FACHB-805) (Anacystis nidulans R2) protein is Phosphomethylpyrimidine synthase.